The following is a 601-amino-acid chain: MEGSDFLLAGVLFLFAAVAAVPLASRLGIGAVLGYLLAGIAIGPWGLGFISDVDEILHFSELGVVFLMFIIGLELNPSKLWQLRRSIFGVGAAQVLLSAALLAGLLMLTHFSWQAAVVGGIGLAMSSTAMALQLMREKGMNRSESGQLGFSVLLFQDLAVIPALALVPLLAGSADEHFDWMKIGMKVLAFVGMLIGGRYLLRPVFRFIAASGVREVFTAATLLLVLGSALFMDALGLSMALGTFIAGVLLAESEYRHELETAIDPFKGLLLGLFFISVGMSLNLGVLYTHLLWVVISVVVLVAVKIFVLYLLARLYGVRSSERMQFAGVLSQGGEFAFVLFSSASSQRLFQGDQMALLLVTVTLSMMTTPLLMKLVDKWLSRQFNGPEEEDEKPWVNDDKPQVIVVGFGRFGQVIGRLLMANKMRITVLERDISAVNLMRKYGYKVYYGDATQVDLLRSAGAEAAESIVITCNEPEDTMKLVEICQQHFPHLHILARARGRVEAHELLQAGVTQFSRETFSSALELGRKTLVTLGMHPHQAQRAQLHFRRLDMRMLRELIPMHTDTVQISRAREARRELEEIFQREMQQERRQLDGWDEFE.

The next 13 helical transmembrane spans lie at 4-24 (SDFL…VPLA), 29-49 (IGAV…GLGF), 55-75 (EILH…GLEL), 87-107 (IFGV…GLLM), 115-135 (AAVV…LQLM), 152-172 (VLLF…LLAG), 177-197 (HFDW…LIGG), 207-227 (FIAA…LVLG), 230-250 (LFMD…GVLL), 268-288 (GLLL…GVLY), 291-311 (LLWV…VLYL), 324-344 (MQFA…FSSA), and 356-376 (ALLL…MKLV). In terms of domain architecture, RCK N-terminal spans 400 to 519 (KPQVIVVGFG…AGVTQFSRET (120 aa)).

The protein belongs to the monovalent cation:proton antiporter 2 (CPA2) transporter (TC 2.A.37) family. KefB subfamily. As to quaternary structure, interacts with the regulatory subunit KefG.

The protein localises to the cell inner membrane. Its function is as follows. Pore-forming subunit of a potassium efflux system that confers protection against electrophiles. Catalyzes K(+)/H(+) antiport. The polypeptide is Glutathione-regulated potassium-efflux system protein KefB (Escherichia coli O127:H6 (strain E2348/69 / EPEC)).